A 71-amino-acid polypeptide reads, in one-letter code: UPF0352 protein VCM66_1964 (71 aa).

It belongs to the UPF0352 family.

This Vibrio cholerae serotype O1 (strain M66-2) protein is UPF0352 protein VCM66_1964.